The chain runs to 250 residues: UPF0736 protein BLi01230/BL03322 (250 aa).

This sequence belongs to the UPF0736 family.

The protein is UPF0736 protein BLi01230/BL03322 of Bacillus licheniformis (strain ATCC 14580 / DSM 13 / JCM 2505 / CCUG 7422 / NBRC 12200 / NCIMB 9375 / NCTC 10341 / NRRL NRS-1264 / Gibson 46).